A 243-amino-acid polypeptide reads, in one-letter code: Uridylate kinase (243 aa).

15–18 (KLSG) contacts ATP. Positions 23-28 (GEEGFG) are involved in allosteric activation by GTP. Glycine 57 lines the UMP pocket. Positions 58 and 62 each coordinate ATP. UMP-binding positions include aspartate 77 and 138–145 (TGNPFFTT). 3 residues coordinate ATP: threonine 165, phenylalanine 171, and aspartate 174.

The protein belongs to the UMP kinase family. Homohexamer.

The protein resides in the cytoplasm. The enzyme catalyses UMP + ATP = UDP + ADP. It functions in the pathway pyrimidine metabolism; CTP biosynthesis via de novo pathway; UDP from UMP (UMPK route): step 1/1. With respect to regulation, allosterically activated by GTP. Inhibited by UTP. Catalyzes the reversible phosphorylation of UMP to UDP. This Aliivibrio fischeri (strain ATCC 700601 / ES114) (Vibrio fischeri) protein is Uridylate kinase.